Reading from the N-terminus, the 135-residue chain is Class I hydrophobin dewA (135 aa).

The signal sequence occupies residues 1-18 (MRFIVSLLAFTAAATATA). 4 disulfides stabilise this stretch: Cys-44-Cys-114, Cys-51-Cys-108, Cys-52-Cys-84, and Cys-115-Cys-122. N-linked (GlcNAc...) asparagine glycosylation occurs at Asn-60.

It belongs to the fungal hydrophobin family. In terms of assembly, forms homodimers at high concentrations, and these dimers are off-pathway to rodlet formation. Dissociation of the dimers into monomers, with resultant exposure of the hydrophobic face, is necessary for self-assembly to form functional amyloid fibrils called rodlets. Self-assembly into fibrillar rodlets occurs spontaneously at hydrophobic:hydrophilic interfaces and the rodlets further associate laterally to form amphipathic monolayers.

Its subcellular location is the secreted. The protein localises to the spore wall. Aerial growth, conidiation, and dispersal of filamentous fungi in the environment rely upon a capability of their secreting small amphipathic proteins called hydrophobins (HPBs) with low sequence identity. Class I can self-assemble into an outermost layer of rodlet bundles on aerial cell surfaces, conferring cellular hydrophobicity that supports fungal growth, development and dispersal; whereas Class II form highly ordered films at water-air interfaces through intermolecular interactions but contribute nothing to the rodlet structure. DewA is a class I hydrophobin that contributes to spore wall hydrophobicity. The polypeptide is Class I hydrophobin dewA (Emericella nidulans (strain FGSC A4 / ATCC 38163 / CBS 112.46 / NRRL 194 / M139) (Aspergillus nidulans)).